The following is a 268-amino-acid chain: Phosphatidylglycerol--prolipoprotein diacylglyceryl transferase (268 aa).

4 helical membrane passes run 14 to 34, 57 to 77, 90 to 110, and 117 to 137; these read LGPI…FAGW, LTFY…IIFY, FFLW…LIAF, and IGAN…IGLG. Arg140 provides a ligand contact to a 1,2-diacyl-sn-glycero-3-phospho-(1'-sn-glycerol). 3 helical membrane passes run 174 to 194, 200 to 220, and 238 to 258; these read QLFE…LVTI, YLVL…CEFF, and GQIL…AVFI.

It belongs to the Lgt family.

The protein localises to the cell inner membrane. It carries out the reaction L-cysteinyl-[prolipoprotein] + a 1,2-diacyl-sn-glycero-3-phospho-(1'-sn-glycerol) = an S-1,2-diacyl-sn-glyceryl-L-cysteinyl-[prolipoprotein] + sn-glycerol 1-phosphate + H(+). It functions in the pathway protein modification; lipoprotein biosynthesis (diacylglyceryl transfer). In terms of biological role, catalyzes the transfer of the diacylglyceryl group from phosphatidylglycerol to the sulfhydryl group of the N-terminal cysteine of a prolipoprotein, the first step in the formation of mature lipoproteins. This chain is Phosphatidylglycerol--prolipoprotein diacylglyceryl transferase, found in Francisella tularensis subsp. holarctica (strain FTNF002-00 / FTA).